The sequence spans 225 residues: NAD(P)H-quinone oxidoreductase subunit K, chloroplastic (225 aa).

[4Fe-4S] cluster contacts are provided by Cys43, Cys44, Cys108, and Cys139.

This sequence belongs to the complex I 20 kDa subunit family. In terms of assembly, NDH is composed of at least 16 different subunits, 5 of which are encoded in the nucleus. The cofactor is [4Fe-4S] cluster.

The protein localises to the plastid. The protein resides in the chloroplast thylakoid membrane. The catalysed reaction is a plastoquinone + NADH + (n+1) H(+)(in) = a plastoquinol + NAD(+) + n H(+)(out). It carries out the reaction a plastoquinone + NADPH + (n+1) H(+)(in) = a plastoquinol + NADP(+) + n H(+)(out). In terms of biological role, NDH shuttles electrons from NAD(P)H:plastoquinone, via FMN and iron-sulfur (Fe-S) centers, to quinones in the photosynthetic chain and possibly in a chloroplast respiratory chain. The immediate electron acceptor for the enzyme in this species is believed to be plastoquinone. Couples the redox reaction to proton translocation, and thus conserves the redox energy in a proton gradient. The polypeptide is NAD(P)H-quinone oxidoreductase subunit K, chloroplastic (Dioscorea elephantipes (Elephant's foot yam)).